The chain runs to 242 residues: Large ribosomal subunit protein uL1 (242 aa).

It belongs to the universal ribosomal protein uL1 family. As to quaternary structure, part of the 50S ribosomal subunit.

Functionally, binds directly to 23S rRNA. The L1 stalk is quite mobile in the ribosome, and is involved in E site tRNA release. Its function is as follows. Protein L1 is also a translational repressor protein, it controls the translation of the L11 operon by binding to its mRNA. This Streptomyces virginiae (Streptomyces cinnamonensis) protein is Large ribosomal subunit protein uL1.